Consider the following 246-residue polypeptide: MDWQKITEKMCDFIQEKVKNSQSQGVVLGLSGGIDSALVATLCKRALKENVFAFLMPTQISNKTNLEDALRLCVDLNLEYKIIEIQSILDAFIKQSENTTLVSLGNFAARIRMSLLYDYSAMKNSLVIGTSNKSELLLGYGTIYGDLAYAFNPIGSLYKSEIYALAKYLNLHENFIKKTPSADLWENQTDEADLGFSYAKIDEGLKALETNDEKLLKILDPSLIAMLKNRMQKNAFKGKMPEILEI.

29 to 36 (GLSGGIDS) provides a ligand contact to ATP. Asp35 contributes to the Mg(2+) binding site. Arg110 serves as a coordination point for deamido-NAD(+). ATP is bound at residue Thr130. Glu135 contributes to the Mg(2+) binding site. Lys159 and Ser181 together coordinate ATP.

It belongs to the NAD synthetase family. Homodimer.

It catalyses the reaction deamido-NAD(+) + NH4(+) + ATP = AMP + diphosphate + NAD(+) + H(+). The protein operates within cofactor biosynthesis; NAD(+) biosynthesis; NAD(+) from deamido-NAD(+) (ammonia route): step 1/1. In terms of biological role, catalyzes the ATP-dependent amidation of deamido-NAD to form NAD. Uses ammonia as a nitrogen source. This Campylobacter jejuni subsp. doylei (strain ATCC BAA-1458 / RM4099 / 269.97) protein is NH(3)-dependent NAD(+) synthetase.